Reading from the N-terminus, the 98-residue chain is NADH-ubiquinone oxidoreductase chain 4L (98 aa).

The next 3 membrane-spanning stretches (helical) occupy residues 1 to 21 (MPPIYINIILAYTASLVGLLM), 29 to 49 (SLLCLEGMMLSLFILATILSL), and 61 to 81 (IILLIFAGCETAVGLALLVMI).

It belongs to the complex I subunit 4L family. In terms of assembly, core subunit of respiratory chain NADH dehydrogenase (Complex I) which is composed of 45 different subunits.

It is found in the mitochondrion inner membrane. It catalyses the reaction a ubiquinone + NADH + 5 H(+)(in) = a ubiquinol + NAD(+) + 4 H(+)(out). Functionally, core subunit of the mitochondrial membrane respiratory chain NADH dehydrogenase (Complex I) which catalyzes electron transfer from NADH through the respiratory chain, using ubiquinone as an electron acceptor. Part of the enzyme membrane arm which is embedded in the lipid bilayer and involved in proton translocation. The sequence is that of NADH-ubiquinone oxidoreductase chain 4L (MT-ND4L) from Galeopterus variegatus (Malayan flying lemur).